A 239-amino-acid chain; its full sequence is Fatty acid metabolism regulator protein (239 aa).

In terms of domain architecture, HTH gntR-type spans Gln6–Phe74. The H-T-H motif DNA-binding region spans Glu34–Gln53.

Homodimer.

Its subcellular location is the cytoplasm. Its function is as follows. Multifunctional regulator of fatty acid metabolism. The protein is Fatty acid metabolism regulator protein of Yersinia pseudotuberculosis serotype O:1b (strain IP 31758).